Consider the following 289-residue polypeptide: Inorganic pyrophosphatase (289 aa).

S2 bears the N-acetylserine mark. K57 carries the post-translational modification N6-acetyllysine. D116, D121, and D153 together coordinate Mg(2+). K228 carries the post-translational modification N6-acetyllysine. S250 is modified (phosphoserine).

The protein belongs to the PPase family. Homodimer. Mg(2+) serves as cofactor. In terms of tissue distribution, expressed ubiquitously.

Its subcellular location is the cytoplasm. The catalysed reaction is diphosphate + H2O = 2 phosphate + H(+). This Homo sapiens (Human) protein is Inorganic pyrophosphatase (PPA1).